Consider the following 299-residue polypeptide: tRNA pseudouridine synthase B (299 aa).

Catalysis depends on D39, which acts as the Nucleophile.

It belongs to the pseudouridine synthase TruB family. Type 1 subfamily.

It carries out the reaction uridine(55) in tRNA = pseudouridine(55) in tRNA. Responsible for synthesis of pseudouridine from uracil-55 in the psi GC loop of transfer RNAs. This chain is tRNA pseudouridine synthase B, found in Syntrophomonas wolfei subsp. wolfei (strain DSM 2245B / Goettingen).